A 330-amino-acid polypeptide reads, in one-letter code: Aspartate--ammonia ligase (330 aa).

It belongs to the class-II aminoacyl-tRNA synthetase family. AsnA subfamily.

Its subcellular location is the cytoplasm. The enzyme catalyses L-aspartate + NH4(+) + ATP = L-asparagine + AMP + diphosphate + H(+). It functions in the pathway amino-acid biosynthesis; L-asparagine biosynthesis; L-asparagine from L-aspartate (ammonia route): step 1/1. The sequence is that of Aspartate--ammonia ligase from Cronobacter sakazakii (strain ATCC BAA-894) (Enterobacter sakazakii).